A 571-amino-acid polypeptide reads, in one-letter code: Proline--tRNA ligase (571 aa).

This sequence belongs to the class-II aminoacyl-tRNA synthetase family. ProS type 1 subfamily. Homodimer.

Its subcellular location is the cytoplasm. The catalysed reaction is tRNA(Pro) + L-proline + ATP = L-prolyl-tRNA(Pro) + AMP + diphosphate. In terms of biological role, catalyzes the attachment of proline to tRNA(Pro) in a two-step reaction: proline is first activated by ATP to form Pro-AMP and then transferred to the acceptor end of tRNA(Pro). As ProRS can inadvertently accommodate and process non-cognate amino acids such as alanine and cysteine, to avoid such errors it has two additional distinct editing activities against alanine. One activity is designated as 'pretransfer' editing and involves the tRNA(Pro)-independent hydrolysis of activated Ala-AMP. The other activity is designated 'posttransfer' editing and involves deacylation of mischarged Ala-tRNA(Pro). The misacylated Cys-tRNA(Pro) is not edited by ProRS. The protein is Proline--tRNA ligase of Vibrio parahaemolyticus serotype O3:K6 (strain RIMD 2210633).